The primary structure comprises 814 residues: Testis-specific zinc finger protein topi (814 aa).

10 consecutive C2H2-type zinc fingers follow at residues 228–250 (NECT…MEKH), 275–297 (VKCN…GLIH), 360–382 (LQCE…SASH), 429–453 (FVCN…TSFH), 467–490 (LPCD…EEKH), 511–533 (YLCD…LRFH), 539–564 (FVCQ…RKCH), 570–592 (YLCL…RLIH), 598–620 (YECE…QRIH), and 626–649 (YSCL…RARH). The segment at 669-705 (TAAAQKAQSHNPEQQDNDVAGGASTSDVPSGSGFMST) is disordered. A compositionally biased stretch (polar residues) spans 691–705 (ASTSDVPSGSGFMST).

Interacts with comr. As to expression, expressed in testis; primary spermatocytes.

It localises to the nucleus. Functionally, required for male meiotic division and spermatid differentiation. Required for accumulation of aly and comr on chromatin. May function as a transcription factor. This chain is Testis-specific zinc finger protein topi (topi), found in Drosophila melanogaster (Fruit fly).